An 84-amino-acid polypeptide reads, in one-letter code: UPF0386 protein Oant_1614 (84 aa).

The protein belongs to the UPF0386 family.

The polypeptide is UPF0386 protein Oant_1614 (Brucella anthropi (strain ATCC 49188 / DSM 6882 / CCUG 24695 / JCM 21032 / LMG 3331 / NBRC 15819 / NCTC 12168 / Alc 37) (Ochrobactrum anthropi)).